The primary structure comprises 405 residues: MPEPVAEPALNGLRLNLRIVSIVMFNFASYLTIGLPLAVLPGYVHDAMGFSAFWAGLIISLQYFATLLSRPHAGRYADVLGPKKIVVFGLCGCFLSGLGYLLADIASAWPMINLLLLGLGRVILGIGQSFAGTGSTLWGVGVVGSLHIGRVISWNGIVTYGAMAMGAPLGVLCYAWGGLQGLALTVMGVALLAVLLALPRPSVKANKGKPLPFRAVLGRVWLYGMALALASAGFGVIATFITLFYDAKGWDGAAFALTLFSVAFVGTRLLFPNGINRLGGLNVAMICFGVEIIGLLLVGTAAMPWMAKIGVLLTGMGFSLVFPALGVVAVKAVPPQNQGAALATYTVFMDMSLGVTGPLAGLVMTWAGVPVIYLAAAGLVAMALLLTWRLKKRPPSALPEAASSS.

The next 12 membrane-spanning stretches (helical) occupy residues isoleucine 19–valine 39, methionine 48–leucine 68, isoleucine 85–isoleucine 105, serine 129–glycine 149, glycine 156–tryptophan 176, glycine 178–leucine 198, glycine 224–phenylalanine 244, glycine 252–proline 272, valine 283–methionine 303, isoleucine 309–alanine 329, threonine 344–methionine 364, and tryptophan 366–leucine 386.

The protein belongs to the major facilitator superfamily. YhhS family.

It localises to the cell inner membrane. This is an uncharacterized protein from Salmonella typhi.